Here is an 88-residue protein sequence, read N- to C-terminus: Small ribosomal subunit protein uS15 (88 aa).

The protein belongs to the universal ribosomal protein uS15 family. In terms of assembly, part of the 30S ribosomal subunit. Forms a bridge to the 50S subunit in the 70S ribosome, contacting the 23S rRNA.

Its function is as follows. One of the primary rRNA binding proteins, it binds directly to 16S rRNA where it helps nucleate assembly of the platform of the 30S subunit by binding and bridging several RNA helices of the 16S rRNA. Functionally, forms an intersubunit bridge (bridge B4) with the 23S rRNA of the 50S subunit in the ribosome. In Geotalea daltonii (strain DSM 22248 / JCM 15807 / FRC-32) (Geobacter daltonii), this protein is Small ribosomal subunit protein uS15.